Consider the following 369-residue polypeptide: UPF0324 membrane protein DVU_0543 (369 aa).

Transmembrane regions (helical) follow at residues 13–31 (IVPG…RTYV), 46–65 (WLVQ…TGMF), 110–132 (GGVA…MWLG), 142–164 (TATM…APGV), 171–193 (LALS…PFIG), 240–262 (WNVV…YWKG), 269–291 (TSLG…GMTA), 306–328 (LHLM…GAYI), and 341–363 (LRIG…LAFI).

The protein belongs to the UPF0324 family.

The protein localises to the cell membrane. This Nitratidesulfovibrio vulgaris (strain ATCC 29579 / DSM 644 / CCUG 34227 / NCIMB 8303 / VKM B-1760 / Hildenborough) (Desulfovibrio vulgaris) protein is UPF0324 membrane protein DVU_0543.